The following is a 179-amino-acid chain: Alkyl hydroperoxide reductase AhpD (179 aa).

Cys130 acts as the Proton donor in catalysis. A disulfide bridge connects residues Cys130 and Cys133. Cys133 acts as the Cysteine sulfenic acid (-SOH) intermediate in catalysis.

Belongs to the AhpD family. Homotrimer.

The enzyme catalyses N(6)-[(R)-dihydrolipoyl]-L-lysyl-[lipoyl-carrier protein] + a hydroperoxide = N(6)-[(R)-lipoyl]-L-lysyl-[lipoyl-carrier protein] + an alcohol + H2O. In terms of biological role, antioxidant protein with alkyl hydroperoxidase activity. Required for the reduction of the AhpC active site cysteine residues and for the regeneration of the AhpC enzyme activity. This Nocardia farcinica (strain IFM 10152) protein is Alkyl hydroperoxide reductase AhpD.